Reading from the N-terminus, the 205-residue chain is Adenylyl-sulfate kinase (205 aa).

31 to 38 (GLSGSGKS) is a binding site for ATP. The Phosphoserine intermediate role is filled by Ser105.

It belongs to the APS kinase family.

It catalyses the reaction adenosine 5'-phosphosulfate + ATP = 3'-phosphoadenylyl sulfate + ADP + H(+). It participates in sulfur metabolism; hydrogen sulfide biosynthesis; sulfite from sulfate: step 2/3. Functionally, catalyzes the synthesis of activated sulfate. In Shewanella halifaxensis (strain HAW-EB4), this protein is Adenylyl-sulfate kinase.